Consider the following 350-residue polypeptide: Ion-translocating oxidoreductase complex subunit D (350 aa).

5 consecutive transmembrane segments (helical) span residues 19–39, 41–61, 67–87, 88–108, and 122–142; these read LMLLVILACLPGFLAQSWFFG, GTLIQILLALVTALGSEALVL, PVKPALLDGSAALTAVLIGLS, LPPLLPWWMLVLGTAFAIIIA, and PAMVAYVLLLVSFPVQMTSWL. Thr186 bears the FMN phosphoryl threonine mark. 4 consecutive transmembrane segments (helical) span residues 213-233, 242-262, 264-284, and 299-316; these read WGGIGWSWVNLGYLLGGLFLL, IPGAILGSLLLAATLGYLMTP, ATATPMFHLFSGATMLGAFFI, and LVYGVLIGVLVYVIRRFG.

The protein belongs to the NqrB/RnfD family. As to quaternary structure, the complex is composed of six subunits: RnfA, RnfB, RnfC, RnfD, RnfE and RnfG. FMN serves as cofactor.

Its subcellular location is the cell inner membrane. In terms of biological role, part of a membrane-bound complex that couples electron transfer with translocation of ions across the membrane. This Aeromonas hydrophila subsp. hydrophila (strain ATCC 7966 / DSM 30187 / BCRC 13018 / CCUG 14551 / JCM 1027 / KCTC 2358 / NCIMB 9240 / NCTC 8049) protein is Ion-translocating oxidoreductase complex subunit D.